The sequence spans 329 residues: Porphobilinogen deaminase (329 aa).

An S-(dipyrrolylmethanemethyl)cysteine modification is found at Cys-253.

The protein belongs to the HMBS family. In terms of assembly, monomer. The cofactor is dipyrromethane.

It catalyses the reaction 4 porphobilinogen + H2O = hydroxymethylbilane + 4 NH4(+). Tetrapolymerization of the monopyrrole PBG into the hydroxymethylbilane pre-uroporphyrinogen in several discrete steps. In Leifsonia xyli subsp. xyli (strain CTCB07), this protein is Porphobilinogen deaminase.